Here is a 248-residue protein sequence, read N- to C-terminus: Pyridoxine 5'-phosphate synthase (248 aa).

Residue Asn12 participates in 3-amino-2-oxopropyl phosphate binding. 14–15 contacts 1-deoxy-D-xylulose 5-phosphate; sequence DH. Arg23 provides a ligand contact to 3-amino-2-oxopropyl phosphate. His48 functions as the Proton acceptor in the catalytic mechanism. 1-deoxy-D-xylulose 5-phosphate-binding residues include Arg50 and His55. Glu75 (proton acceptor) is an active-site residue. Thr105 contacts 1-deoxy-D-xylulose 5-phosphate. His196 serves as the catalytic Proton donor. Residues Gly197 and 218-219 each bind 3-amino-2-oxopropyl phosphate; that span reads GH.

This sequence belongs to the PNP synthase family. Homooctamer; tetramer of dimers.

Its subcellular location is the cytoplasm. The enzyme catalyses 3-amino-2-oxopropyl phosphate + 1-deoxy-D-xylulose 5-phosphate = pyridoxine 5'-phosphate + phosphate + 2 H2O + H(+). Its pathway is cofactor biosynthesis; pyridoxine 5'-phosphate biosynthesis; pyridoxine 5'-phosphate from D-erythrose 4-phosphate: step 5/5. Its function is as follows. Catalyzes the complicated ring closure reaction between the two acyclic compounds 1-deoxy-D-xylulose-5-phosphate (DXP) and 3-amino-2-oxopropyl phosphate (1-amino-acetone-3-phosphate or AAP) to form pyridoxine 5'-phosphate (PNP) and inorganic phosphate. The sequence is that of Pyridoxine 5'-phosphate synthase from Azotobacter vinelandii (strain DJ / ATCC BAA-1303).